The following is a 381-amino-acid chain: Lipopolysaccharide 1,2-N-acetylglucosaminetransferase (381 aa).

It belongs to the glycosyltransferase group 1 family. Glycosyltransferase 4 subfamily.

Its subcellular location is the cell inner membrane. The enzyme catalyses UDP-N-acetyl-alpha-D-glucosamine + [lipopolysaccharide] = UDP + N-acetyl-alpha-D-glucosaminyl-[lipopolysaccharide].. It functions in the pathway bacterial outer membrane biogenesis; LPS core biosynthesis. In terms of biological role, transferase involved in the biosynthesis of the core oligosaccharide region of lipopolysaccharide (LPS). Catalyzes the addition of the terminal N-acetyl-D-glucosamine (GlcNAc) group to the outer-core glucose II, the last step of the lipid A-core oligosaccharide biosynthesis. The polypeptide is Lipopolysaccharide 1,2-N-acetylglucosaminetransferase (Salmonella typhimurium (strain LT2 / SGSC1412 / ATCC 700720)).